The following is a 618-amino-acid chain: DNA mismatch repair protein MutL (618 aa).

Residues Ala-366–Gly-381 show a composition bias toward low complexity. The tract at residues Ala-366–Lys-405 is disordered. The segment covering Gly-382–Ser-392 has biased composition (gly residues).

It belongs to the DNA mismatch repair MutL/HexB family.

Functionally, this protein is involved in the repair of mismatches in DNA. It is required for dam-dependent methyl-directed DNA mismatch repair. May act as a 'molecular matchmaker', a protein that promotes the formation of a stable complex between two or more DNA-binding proteins in an ATP-dependent manner without itself being part of a final effector complex. This Salmonella agona (strain SL483) protein is DNA mismatch repair protein MutL.